The sequence spans 450 residues: Tubulin alpha chain (450 aa).

Gln-11 is a binding site for GTP. Residue Lys-40 is modified to N6-acetyllysine. GTP is bound by residues Glu-71, Gly-144, Thr-145, Thr-179, Asn-206, and Asn-228. Residue Glu-71 participates in Mg(2+) binding. Glu-254 is an active-site residue.

Belongs to the tubulin family. In terms of assembly, dimer of alpha and beta chains. A typical microtubule is a hollow water-filled tube with an outer diameter of 25 nm and an inner diameter of 15 nM. Alpha-beta heterodimers associate head-to-tail to form protofilaments running lengthwise along the microtubule wall with the beta-tubulin subunit facing the microtubule plus end conferring a structural polarity. Microtubules usually have 13 protofilaments but different protofilament numbers can be found in some organisms and specialized cells. Requires Mg(2+) as cofactor. Undergoes a tyrosination/detyrosination cycle, the cyclic removal and re-addition of a C-terminal tyrosine residue by the enzymes tubulin tyrosine carboxypeptidase (TTCP) and tubulin tyrosine ligase (TTL), respectively. In terms of processing, acetylation of alpha chains at Lys-40 stabilizes microtubules and affects affinity and processivity of microtubule motors. This modification has a role in multiple cellular functions, ranging from cell motility, cell cycle progression or cell differentiation to intracellular trafficking and signaling.

It is found in the cytoplasm. The protein localises to the cytoskeleton. The catalysed reaction is GTP + H2O = GDP + phosphate + H(+). In terms of biological role, tubulin is the major constituent of microtubules, a cylinder consisting of laterally associated linear protofilaments composed of alpha- and beta-tubulin heterodimers. Microtubules grow by the addition of GTP-tubulin dimers to the microtubule end, where a stabilizing cap forms. Below the cap, tubulin dimers are in GDP-bound state, owing to GTPase activity of alpha-tubulin. This chain is Tubulin alpha chain (TUBA), found in Prunus dulcis (Almond).